The following is a 340-amino-acid chain: N(4)-(Beta-N-acetylglucosaminyl)-L-asparaginase (340 aa).

Positions 1 to 45 are cleaved as a signal peptide; it reads MRIIYKQQTMNNNRRDFIKKLGIATAAIAINPLEAKNLLDTSEPK. The Nucleophile role is filled by threonine 197. Substrate is bound by residues 225 to 228 and 248 to 251; these read RVGD and TGHG.

This sequence belongs to the Ntn-hydrolase family. In terms of assembly, heterotetramer of two alpha and two beta chains arranged as a dimer of alpha/beta heterodimers. Cleaved into an alpha and beta chain by autocatalysis; this activates the enzyme. The N-terminal residue of the beta subunit is responsible for the nucleophile hydrolase activity.

Its subcellular location is the periplasm. It catalyses the reaction N(4)-(beta-N-acetyl-D-glucosaminyl)-L-asparagine + H2O = N-acetyl-beta-D-glucosaminylamine + L-aspartate + H(+). Cleaves the GlcNAc-Asn bond which joins oligosaccharides to the peptide of asparagine-linked glycoproteins. Requires that the glycosylated asparagine moiety is not substituted on its N-(R1) and C- (R2) terminus. The protein is N(4)-(Beta-N-acetylglucosaminyl)-L-asparaginase of Elizabethkingia miricola (Chryseobacterium miricola).